Reading from the N-terminus, the 207-residue chain is Thiamine-phosphate synthase (207 aa).

Residues glutamine 38–lysine 42 and asparagine 70 each bind 4-amino-2-methyl-5-(diphosphooxymethyl)pyrimidine. Aspartate 71 and aspartate 90 together coordinate Mg(2+). Threonine 109 is a 4-amino-2-methyl-5-(diphosphooxymethyl)pyrimidine binding site. Threonine 135–serine 137 serves as a coordination point for 2-[(2R,5Z)-2-carboxy-4-methylthiazol-5(2H)-ylidene]ethyl phosphate. Lysine 138 contacts 4-amino-2-methyl-5-(diphosphooxymethyl)pyrimidine. Residues glycine 165 and isoleucine 185 to serine 186 contribute to the 2-[(2R,5Z)-2-carboxy-4-methylthiazol-5(2H)-ylidene]ethyl phosphate site.

This sequence belongs to the thiamine-phosphate synthase family. Mg(2+) is required as a cofactor.

It catalyses the reaction 2-[(2R,5Z)-2-carboxy-4-methylthiazol-5(2H)-ylidene]ethyl phosphate + 4-amino-2-methyl-5-(diphosphooxymethyl)pyrimidine + 2 H(+) = thiamine phosphate + CO2 + diphosphate. The catalysed reaction is 2-(2-carboxy-4-methylthiazol-5-yl)ethyl phosphate + 4-amino-2-methyl-5-(diphosphooxymethyl)pyrimidine + 2 H(+) = thiamine phosphate + CO2 + diphosphate. The enzyme catalyses 4-methyl-5-(2-phosphooxyethyl)-thiazole + 4-amino-2-methyl-5-(diphosphooxymethyl)pyrimidine + H(+) = thiamine phosphate + diphosphate. The protein operates within cofactor biosynthesis; thiamine diphosphate biosynthesis; thiamine phosphate from 4-amino-2-methyl-5-diphosphomethylpyrimidine and 4-methyl-5-(2-phosphoethyl)-thiazole: step 1/1. Functionally, condenses 4-methyl-5-(beta-hydroxyethyl)thiazole monophosphate (THZ-P) and 2-methyl-4-amino-5-hydroxymethyl pyrimidine pyrophosphate (HMP-PP) to form thiamine monophosphate (TMP). The protein is Thiamine-phosphate synthase of Clostridium perfringens (strain SM101 / Type A).